Here is a 345-residue protein sequence, read N- to C-terminus: Uroporphyrinogen decarboxylase (345 aa).

Residues 27–31 (RQAGR), Phe46, Asp76, Tyr152, Ser207, and His320 each bind substrate.

Belongs to the uroporphyrinogen decarboxylase family. In terms of assembly, homodimer.

It is found in the cytoplasm. The catalysed reaction is uroporphyrinogen III + 4 H(+) = coproporphyrinogen III + 4 CO2. The protein operates within porphyrin-containing compound metabolism; protoporphyrin-IX biosynthesis; coproporphyrinogen-III from 5-aminolevulinate: step 4/4. In terms of biological role, catalyzes the decarboxylation of four acetate groups of uroporphyrinogen-III to yield coproporphyrinogen-III. The chain is Uroporphyrinogen decarboxylase from Geobacillus sp. (strain WCH70).